A 218-amino-acid polypeptide reads, in one-letter code: Uracil-DNA glycosylase (218 aa).

Residue aspartate 59 is the Proton acceptor of the active site.

Belongs to the uracil-DNA glycosylase (UDG) superfamily. UNG family.

The protein localises to the cytoplasm. It carries out the reaction Hydrolyzes single-stranded DNA or mismatched double-stranded DNA and polynucleotides, releasing free uracil.. Excises uracil residues from the DNA which can arise as a result of misincorporation of dUMP residues by DNA polymerase or due to deamination of cytosine. This chain is Uracil-DNA glycosylase, found in Staphylococcus aureus (strain JH1).